Reading from the N-terminus, the 409-residue chain is Tryptophan synthase beta chain (409 aa).

Lysine 98 carries the post-translational modification N6-(pyridoxal phosphate)lysine.

The protein belongs to the TrpB family. Tetramer of two alpha and two beta chains. Requires pyridoxal 5'-phosphate as cofactor.

It catalyses the reaction (1S,2R)-1-C-(indol-3-yl)glycerol 3-phosphate + L-serine = D-glyceraldehyde 3-phosphate + L-tryptophan + H2O. Its pathway is amino-acid biosynthesis; L-tryptophan biosynthesis; L-tryptophan from chorismate: step 5/5. Functionally, the beta subunit is responsible for the synthesis of L-tryptophan from indole and L-serine. The chain is Tryptophan synthase beta chain from Jannaschia sp. (strain CCS1).